The following is a 415-amino-acid chain: MGDKAGTRVFKKSSPNCKVTVYLGKRDFVDHLDQVDPVDGVILVDPEYLKDRKVFVTLTCAFRYGREDLDVLGLSFRKDLYISTFQAFPPIAEERKANSRLQERLLKKLGQQAHPFYFTIPQNLPCSVTLQPGPEDTGKACGVDFEIRAFCAKSIEEKIHKRNSVRLVIRKVQYAPEKPGPQPMVETTRSFLMSDRSLHLEASLDKELYYHGEPISVNVHVTNNSTKTVKRLKISVRQYADICLFSTAQYKCPVAQVEADDQVSSSSTFCKVYTLTPTLDKNREKRGLALDGKLKHEDTNLASSTIVKDVTNKEVLGILVSYRVKVKLVISRGGLLSGVLERDVSVELPFVLMHPKPTELPISRPQSAVPDSDPPIDTNLIEFETNSFSQDDDFVFEDFARLRLKGMADDKDDDC.

The protein belongs to the arrestin family.

It is found in the cytoplasm. This is Arrestin red cell isoform 3 from Oncorhynchus mykiss (Rainbow trout).